Here is a 155-residue protein sequence, read N- to C-terminus: Cyanate hydratase (155 aa).

Catalysis depends on residues arginine 95, glutamate 98, and serine 121.

It belongs to the cyanase family.

It catalyses the reaction cyanate + hydrogencarbonate + 3 H(+) = NH4(+) + 2 CO2. Functionally, catalyzes the reaction of cyanate with bicarbonate to produce ammonia and carbon dioxide. This Pseudomonas syringae pv. tomato (strain ATCC BAA-871 / DC3000) protein is Cyanate hydratase.